The chain runs to 98 residues: Bombyxin A-3 homolog (98 aa).

Positions M1–G18 are cleaved as a signal peptide. 3 cysteine pairs are disulfide-bonded: C26–C85, C38–C98, and C84–C89. Residues T47 to G75 constitute a propeptide, c peptide like.

This sequence belongs to the insulin family. As to quaternary structure, heterodimer of a B chain and an A chain linked by two disulfide bonds.

The protein resides in the secreted. Functionally, brain peptide responsible for activation of prothoracic glands to produce ecdysone in insects. The protein is Bombyxin A-3 homolog (SBXA3) of Samia cynthia (Ailanthus silkmoth).